Consider the following 220-residue polypeptide: 7-cyano-7-deazaguanine synthase (220 aa).

7-17 (LSGGMDSSTLA) is an ATP binding site. Zn(2+) contacts are provided by C187, C195, C198, and C201.

It belongs to the QueC family. Requires Zn(2+) as cofactor.

The catalysed reaction is 7-carboxy-7-deazaguanine + NH4(+) + ATP = 7-cyano-7-deazaguanine + ADP + phosphate + H2O + H(+). The protein operates within purine metabolism; 7-cyano-7-deazaguanine biosynthesis. Functionally, catalyzes the ATP-dependent conversion of 7-carboxy-7-deazaguanine (CDG) to 7-cyano-7-deazaguanine (preQ(0)). This chain is 7-cyano-7-deazaguanine synthase, found in Methanospirillum hungatei JF-1 (strain ATCC 27890 / DSM 864 / NBRC 100397 / JF-1).